We begin with the raw amino-acid sequence, 1060 residues long: Protein transport protein Sec16B (1060 aa).

Positions 1–86 (MELWAPQRLP…GDWHQPVSGV (86 aa)) are disordered. The required for endoplasmic reticulum localization stretch occupies residues 34–224 (RPVPHSWHNG…PSLASESNLL (191 aa)). Residues 41 to 50 (HNGERFHQWQ) are compositionally biased toward basic and acidic residues. Positions 51–60 (DNRGSPQPQQ) are enriched in polar residues. Ser55, Ser143, Ser167, Ser188, and Ser191 each carry phosphoserine. Disordered stretches follow at residues 163–236 (ENQH…SSSY), 245–264 (APER…QADV), 711–733 (KVAG…GGTT), 770–796 (PSPQ…GTPR), and 834–1060 (PGEN…TQPC). Polar residues-rich tracts occupy residues 165–195 (QHSP…NSGQ) and 213–222 (NKPSLASESN). The span at 223 to 236 (LLQQRESGLSSSSY) shows a compositional bias: low complexity. Phosphoserine is present on residues Ser254 and Ser258. The central conserved domain (CCD); required for localization to endoplasmic reticulum exit sites stretch occupies residues 271 to 713 (APMKFYIPHV…LRRQLEQKVA (443 aa)). Residues 837 to 847 (NTVSQETSQPP) show a composition bias toward polar residues. Residue Thr858 is modified to Phosphothreonine. Residues Ser868, Ser871, Ser874, Ser882, and Ser883 each carry the phosphoserine modification. 2 stretches are compositionally biased toward basic and acidic residues: residues 875–890 (AKED…DKNS) and 899–908 (KLGDGKEHTK). Residues 909–918 (SSGFGWFSWF) show a composition bias toward low complexity. Residues 930 to 941 (GDEDSSDSPDSE) are compositionally biased toward acidic residues. Residues 991-1001 (AAAGAGVGGLS) are compositionally biased toward gly residues. Residues 1031–1046 (NPSQVPQLPTATSLNR) are compositionally biased toward polar residues.

The protein belongs to the SEC16 family. As to quaternary structure, SEC16A and SEC16B are each present in multiple copies in a heteromeric complex. Interacts with TFG. Interacts with SEC13. In terms of tissue distribution, ubiquitous.

It localises to the endoplasmic reticulum membrane. It is found in the golgi apparatus membrane. Functionally, plays a role in the organization of the endoplasmic reticulum exit sites (ERES), also known as transitional endoplasmic reticulum (tER). Required for secretory cargo traffic from the endoplasmic reticulum to the Golgi apparatus. Involved in peroxisome biogenesis. Regulates the transport of peroxisomal biogenesis factors PEX3 and PEX16 from the ER to peroxisomes. This Homo sapiens (Human) protein is Protein transport protein Sec16B (SEC16B).